The sequence spans 700 residues: MESAGKQDNNATQQLPQRQQRGNQQANKNLGKHNAQKQNDSADGGPAEKKQRFGGPNAQNQNQNQNQNGGVTGGGGAVGGPNQNKNFGNNKGGFVGNRNRNNNRAGNQNRTFPGNNNPNQKPNNETSKADGPNALAKNNEPATAAAGQNQANQNANKGQNQRQGQNQNQNQVHGQGNQGGPGNQGGAGNQGGQGNQGGAGNQGNGQGFRGRNAGNNQGGGFSGGPQNQQRDNRNRSGPRPGGGAGGAMNSTNMGGGGGGGGGGGPRGGEDFFITQRLRSISGPTFELEPVEVPTETKFSGRNRLYVGNLTNDITDDELREMFKPYGEISEIFSNLDKNFTFLKVDYHPNAEKAKRALDGSMRKGRQLRVRFAPNATILRVSNLTPFVSNELLYKSFEIFGPIERASITVDDRGKHMGEGIVEFAKKSSASACLRMCNEKCFFLTASLRPCLVDPMEVNDDTDGLPEKAFNKKMPDFNQERSIGPRFADPNSFEHEYGSRWKQLHNLFKTKQDALKRELKMEEDKLEAQMEYARYEQETELLRQELRKREVDNERKKLEWEMREKQAEEMRKREEETMRRHQTEMQSHMNRQEEDMLRRQQETLFMKAQQLNSLLDQQEGFGGGGGGNNSTFDNFAGNSNSPFEVFRGNNNNNSTMIGNNAAPNTQDSFAFEFGVNNMNQGGNQRGNNGGGNNVPWGRRRF.

A disordered region spans residues 1-270; it reads MESAGKQDNN…GGGGPRGGED (270 aa). Low complexity-rich tracts occupy residues 9–29 and 54–69; these read NNAT…ANKN and GGPN…NQNG. The span at 70 to 79 shows a compositional bias: gly residues; that stretch reads GVTGGGGAVG. Composition is skewed to low complexity over residues 80 to 89, 96 to 124, and 144 to 175; these read GPNQNKNFGN, GNRN…KPNN, and AAAG…VHGQ. Over residues 176–208 the composition is skewed to gly residues; that stretch reads GNQGGPGNQGGAGNQGGQGNQGGAGNQGNGQGF. Serine 236 bears the Phosphoserine mark. Gly residues predominate over residues 253–266; it reads MGGGGGGGGGGGPR. 2 consecutive RRM domains span residues 302-374 and 376-457; these read NRLY…FAPN and TILR…PMEV. The stretch at 505–616 forms a coiled coil; the sequence is NLFKTKQDAL…AQQLNSLLDQ (112 aa). The segment covering 568–582 has biased composition (basic and acidic residues); it reads EMRKREEETMRRHQT. 2 disordered regions span residues 568 to 591 and 677 to 700; these read EMRK…MNRQ and MNQG…RRRF. Residues 682–691 are compositionally biased toward gly residues; the sequence is NQRGNNGGGN.

Required for normal vision and courtship behavior in Drosophila. The protein is Protein no-on-transient A (nonA) of Drosophila melanogaster (Fruit fly).